The sequence spans 228 residues: Glycosylphosphatidylinositol-anchored high density lipoprotein-binding protein 1 (228 aa).

An N-terminal signal peptide occupies residues 1–22 (MKALRAVLLILLLSGQPGSGWA). A disordered region spans residues 21 to 32 (WAQEDGDADPEP). An important for LPL transport to the lumenal surface of endothelial cells region spans residues 24–48 (EDGDADPEPENYNYDDDDDEEEEEE). Over residues 24-49 (EDGDADPEPENYNYDDDDDEEEEEET) the composition is skewed to acidic residues. Tyr35 carries the sulfotyrosine modification. Positions 61–148 (LQCYFCQVLH…PWQNPQVQNP (88 aa)) constitute a UPAR/Ly6 domain. 5 cysteine pairs are disulfide-bonded: Cys63/Cys88, Cys66/Cys75, Cys81/Cys109, Cys113/Cys129, and Cys130/Cys135. Asn76 is a glycosylation site (N-linked (GlcNAc...) asparagine). Residues 102–108 (LTTYSMW) are important for interaction with LPL. Positions 145–200 (VQNPLGGRADSPLESGTRHPQGGKFSHPQVVKAAHPQSDGANLPKSGKANQPQGSG) are disordered. Gly198 carries the GPI-anchor amidated glycine lipid modification. Positions 199-228 (SGAGYPSGWTKFGNIALLLSFFTCLWASGA) are cleaved as a propeptide — removed in mature form.

In terms of assembly, mostly monomer, but also homodimer and homooligomer. Interacts with lipoprotein lipase (LPL). Interacts with high affinity with high-density lipoprotein (HDL). Interacts with chylomicrons. Interacts with APOA5. In terms of processing, glycosylation of Asn-76 is critical for cell surface localization. Post-translationally, sulfation of a Tyr in the N-terminal acidic region increases the affinity for LPL. Detected in fat tissue. Detected on the luminal surface of capillary endothelial cells in heart, skeletal muscle and brown adipose tissue (at protein level). Detected in heart and brown adipose tissue. Expressed at lower levels in lung and liver.

Its subcellular location is the apical cell membrane. It is found in the basolateral cell membrane. The protein localises to the cell membrane. In terms of biological role, mediates the transport of lipoprotein lipase LPL from the basolateral to the apical surface of endothelial cells in capillaries. Anchors LPL on the surface of endothelial cells in the lumen of blood capillaries. Thereby, plays an important role in lipolytic processing of chylomicrons by LPL, triglyceride metabolism and lipid homeostasis. Binds chylomicrons and phospholipid particles that contain APOA5. Binds high-density lipoprotein (HDL) and plays a role in the uptake of lipids from HDL. The sequence is that of Glycosylphosphatidylinositol-anchored high density lipoprotein-binding protein 1 from Mus musculus (Mouse).